A 154-amino-acid polypeptide reads, in one-letter code: Putative F-box protein At2g11200 (154 aa).

The F-box domain maps to 5–51 (TTAMSDLPRDLEEEVLSRVQLASLRAVRTTCKKWNRRLSKYRFTKKY).

This Arabidopsis thaliana (Mouse-ear cress) protein is Putative F-box protein At2g11200.